The primary structure comprises 114 residues: Large ribosomal subunit protein bL19 (114 aa).

It belongs to the bacterial ribosomal protein bL19 family.

This protein is located at the 30S-50S ribosomal subunit interface and may play a role in the structure and function of the aminoacyl-tRNA binding site. This is Large ribosomal subunit protein bL19 from Clostridium botulinum (strain ATCC 19397 / Type A).